A 147-amino-acid chain; its full sequence is Ribonuclease H (147 aa).

The RNase H type-1 domain occupies 1–142 (MTEIVEIFTD…ADALARSAIT (142 aa)). Mg(2+) contacts are provided by aspartate 10, glutamate 48, aspartate 70, and aspartate 134.

It belongs to the RNase H family. As to quaternary structure, monomer. The cofactor is Mg(2+).

It localises to the cytoplasm. The enzyme catalyses Endonucleolytic cleavage to 5'-phosphomonoester.. Its function is as follows. Endonuclease that specifically degrades the RNA of RNA-DNA hybrids. This is Ribonuclease H from Nitrosococcus oceani (strain ATCC 19707 / BCRC 17464 / JCM 30415 / NCIMB 11848 / C-107).